The primary structure comprises 306 residues: Pantothenate kinase (306 aa).

ATP is bound at residue 90–97 (GSVAVGKS).

It belongs to the prokaryotic pantothenate kinase family.

The protein localises to the cytoplasm. It carries out the reaction (R)-pantothenate + ATP = (R)-4'-phosphopantothenate + ADP + H(+). It functions in the pathway cofactor biosynthesis; coenzyme A biosynthesis; CoA from (R)-pantothenate: step 1/5. The polypeptide is Pantothenate kinase (Lactococcus lactis subsp. cremoris (strain MG1363)).